Reading from the N-terminus, the 516-residue chain is Probable cytosol aminopeptidase (516 aa).

Mn(2+)-binding residues include Lys288 and Asp293. Lys300 is an active-site residue. Positions 311, 370, and 372 each coordinate Mn(2+). Arg374 is an active-site residue.

Belongs to the peptidase M17 family. Requires Mn(2+) as cofactor.

The protein resides in the cytoplasm. The enzyme catalyses Release of an N-terminal amino acid, Xaa-|-Yaa-, in which Xaa is preferably Leu, but may be other amino acids including Pro although not Arg or Lys, and Yaa may be Pro. Amino acid amides and methyl esters are also readily hydrolyzed, but rates on arylamides are exceedingly low.. It carries out the reaction Release of an N-terminal amino acid, preferentially leucine, but not glutamic or aspartic acids.. Its function is as follows. Presumably involved in the processing and regular turnover of intracellular proteins. Catalyzes the removal of unsubstituted N-terminal amino acids from various peptides. In Cupriavidus taiwanensis (strain DSM 17343 / BCRC 17206 / CCUG 44338 / CIP 107171 / LMG 19424 / R1) (Ralstonia taiwanensis (strain LMG 19424)), this protein is Probable cytosol aminopeptidase.